A 759-amino-acid chain; its full sequence is NADP-dependent malic enzyme (759 aa).

The interval 1–428 (MDDQLKQSAL…KLTEFVYKTN (428 aa)) is malic enzyme. The active-site Proton donor is Tyr-39. At Lys-56 the chain carries N6-acetyllysine. Catalysis depends on Lys-94, which acts as the Proton acceptor. The a divalent metal cation site is built by Glu-136, Asp-137, and Asp-162. NADP(+) is bound by residues 195 to 198 (AGAA), Asn-288, and Asn-320. Residues 429-759 (LFMKPIFSQA…AVVEAQTQPL (331 aa)) are phosphate acetyltransferase; required for oligomerization, inhibition by acetyl-CoA and activation by glutamate, aspartate, and glucose-6-phosphate.

It in the N-terminal section; belongs to the malic enzymes family. In the C-terminal section; belongs to the phosphate acetyltransferase and butyryltransferase family. In terms of assembly, homooligomer, possibly an octamer. Requires Mg(2+) as cofactor. The cofactor is Mn(2+).

The enzyme catalyses (S)-malate + NADP(+) = pyruvate + CO2 + NADPH. It carries out the reaction oxaloacetate + H(+) = pyruvate + CO2. Inhibited by 4 mM Mg(2+) and acetyl-CoA, competitively inhibited by fumarate and oxaloacetate. Activated by glutamate and aspartate, glucose-6-phosphate, acetyl-phosphate and 2 mM KCl. Functionally, catalyzes the decarboxylation of malate to pyruvate. In vitro, shows malolactic enzyme activity in the presence of NADPH. However, it is unlikely that this activity is of relevance in E.coli, which produces little NADPH. This chain is NADP-dependent malic enzyme (maeB), found in Escherichia coli (strain K12).